We begin with the raw amino-acid sequence, 161 residues long: Anaerobic nitrite reductase GLB1 (161 aa).

One can recognise a Globin domain in the interval 9-157; it reads VFTEEQEALV…LVAAIKSEMK (149 aa). The Homodimerization motif lies at 42–46; the sequence is EIAPS. Positions 52, 66, 70, 100, and 105 each coordinate heme b. A Homodimerization motif is present at residues 112-123; the sequence is NEHFETRFALLE.

This sequence belongs to the plant globin family. In terms of assembly, homodimer. Requires heme b as cofactor. As to expression, root specific.

The protein resides in the cytoplasm. It is found in the nucleus. It catalyses the reaction Fe(III)-heme b-[protein] + nitric oxide + H2O = Fe(II)-heme b-[protein] + nitrite + 2 H(+). Functionally, phytoglobin that reduces nitrite to nitric oxide (NO) under anoxic conditions (e.g. during flooding or in waterlogged soil) and upon root nodulation. Required for general plant development and during nodulation, especially for the onset of symbiosis. Monitors nitric oxide (NO) levels during early phase of the nitrogen-fixing symbiosis and buffers oxygen in functioning nodules. May not function as an oxygen storage or transport protein. Has an unusually high affinity for O(2) through a hexacoordinate heme iron because of a very low dissociation constant. The sequence is that of Anaerobic nitrite reductase GLB1 (GLB1) from Trema tomentosum (Peach-leaf poison-bush).